A 243-amino-acid chain; its full sequence is Probable transcriptional regulatory protein Bpet3099 (243 aa).

The tract at residues 1–21 (MAGHSKWANIQHRKGRQDAKR) is disordered.

The protein belongs to the TACO1 family.

It is found in the cytoplasm. This is Probable transcriptional regulatory protein Bpet3099 from Bordetella petrii (strain ATCC BAA-461 / DSM 12804 / CCUG 43448).